Reading from the N-terminus, the 210-residue chain is Probable GTP-binding protein EngB (210 aa).

Positions 25–199 constitute an EngB-type G domain; the sequence is RGIEVAFAGR…RQKLDSWFSE (175 aa). Residues 33–40, 60–64, 78–81, 145–148, and 178–180 contribute to the GTP site; these read GRSNAGKS, GRTQL, DLPG, TKAD, and FSS. Mg(2+) is bound by residues Ser40 and Thr62.

It belongs to the TRAFAC class TrmE-Era-EngA-EngB-Septin-like GTPase superfamily. EngB GTPase family. Mg(2+) is required as a cofactor.

Its function is as follows. Necessary for normal cell division and for the maintenance of normal septation. This is Probable GTP-binding protein EngB from Salmonella paratyphi B (strain ATCC BAA-1250 / SPB7).